A 136-amino-acid chain; its full sequence is ATP synthase epsilon chain, chloroplastic (136 aa).

It belongs to the ATPase epsilon chain family. As to quaternary structure, F-type ATPases have 2 components, CF(1) - the catalytic core - and CF(0) - the membrane proton channel. CF(1) has five subunits: alpha(3), beta(3), gamma(1), delta(1), epsilon(1). CF(0) has three main subunits: a, b and c.

Its subcellular location is the plastid. It is found in the chloroplast thylakoid membrane. Functionally, produces ATP from ADP in the presence of a proton gradient across the membrane. This is ATP synthase epsilon chain, chloroplastic from Chaetosphaeridium globosum (Charophycean green alga).